Consider the following 405-residue polypeptide: Cytoplasmic polyadenylated homeobox-like protein (405 aa).

2 disordered regions span residues 1 to 33 (MNLDGTSGGFPAEEDHHNEERQTKNKRKTKHRH) and 340 to 363 (PWDLGKQWSSAQSQLQSQLPQNNG). Positions 13-23 (EEDHHNEERQT) are enriched in basic and acidic residues. A compositionally biased stretch (basic residues) spans 24–33 (KNKRKTKHRH). Positions 28-87 (KTKHRHKFSEELLQELKEIFGENCYPDYTTRKTLAIKFDCPVNVIDNWFQNKRARLPPAE) form a DNA-binding region, homeobox. Residues 346–360 (QWSSAQSQLQSQLPQ) show a composition bias toward low complexity.

Its subcellular location is the nucleus. Its function is as follows. Transcription factor that acts as activator. The sequence is that of Cytoplasmic polyadenylated homeobox-like protein from Homo sapiens (Human).